Reading from the N-terminus, the 149-residue chain is Calmodulin-3 (149 aa).

Ala-2 bears the N-acetylalanine mark. 4 EF-hand domains span residues 8–43 (DQIA…LGQN), 44–79 (PTEA…KMKD), 81–116 (DSEE…LGEK), and 117–149 (LTDE…MMAK). Residues Asp-21, Asp-23, Asp-25, Cys-27, Glu-32, Asp-57, Asp-59, Asn-61, Thr-63, Glu-68, Asp-94, Asp-96, Asn-98, and Glu-105 each coordinate Ca(2+). Lys-116 is modified (N6,N6,N6-trimethyllysine). 5 residues coordinate Ca(2+): Asp-130, Asp-132, Asp-134, Gln-136, and Glu-141.

This sequence belongs to the calmodulin family.

Calmodulin mediates the control of a large number of enzymes, ion channels and other proteins by Ca(2+). Among the enzymes to be stimulated by the calmodulin-Ca(2+) complex are a number of protein kinases and phosphatases. The chain is Calmodulin-3 (CAM3) from Oryza sativa subsp. indica (Rice).